Reading from the N-terminus, the 567-residue chain is MDDSSINKELKQKLNVSYCEEESESEGQKEAPESRETQSQTPDWAEGQESEAKFTPPRTPSSSIHGVGTFEEKDKMSPDQALRTPGPGFHKCPGTPAQPDSRSEVVHCESPYTPKSLLSQSVISSTEKLPSRGSKHLRFTPVPFVDEMTSSALVNINPFTPESYRKQFLRSNGKRKTRGDLEEADPGEGKVEQGLPAKRCVLRETNMASRYEKEFLEVEKIGVGEFGTVYKCIKRLDGCVYAIKRSMKPVAGLSNENLALHEVYAHAVLGHHPHVVRYYSAWAEDDHMIIQNEYCNGGSLQTAISENTKSGNHFPELKLKDILLQISLGLKYIHNSGMVHLDIKPSNIFICHKMQCDSPVVPEEIENEADWFLSANVMYKIAGDLGHVTSISKPKVEEGDSRFLANEILQEDYQHLPKADIFALGLTIAVAAGAESLPANGAKWHHIREGNLPDIPQKLSEEFHNLLKNMIHPDPSERPSAAGLARSRVLRPSLRKAEELQQQLNLEKSKTATLERELREAQQAWSPQEEHSDPGVSGTPTGSRCTKRPVGGKSAKSSSFTCGKSSP.

Composition is skewed to basic and acidic residues over residues 1 to 12 and 26 to 36; these read MDDSSINKELKQ and EGQKEAPESRE. Disordered regions lie at residues 1 to 103 and 170 to 191; these read MDDS…DSRS and RSNG…EGKV. Residue Ser-77 is modified to Phosphoserine. Positions 174-176 match the Nuclear localization signal motif; it reads KRK. Positions 215-494 constitute a Protein kinase domain; that stretch reads FLEVEKIGVG…ARSRVLRPSL (280 aa). Residues 221 to 229 and Lys-244 contribute to the ATP site; that span reads IGVGEFGTV. The Nuclear export signal signature appears at 318–332; it reads KLKDILLQISLGLKY. The active-site Proton acceptor is Asp-342. Residues Asn-347 and Asp-384 each coordinate Mg(2+). Residues 497–523 adopt a coiled-coil conformation; it reads AEELQQQLNLEKSKTATLERELREAQQ. The interval 502–567 is disordered; sequence QQLNLEKSKT…SSFTCGKSSP (66 aa). Residues 507–520 show a composition bias toward basic and acidic residues; the sequence is EKSKTATLERELRE. Positions 555-567 are enriched in polar residues; the sequence is AKSSSFTCGKSSP.

It belongs to the protein kinase superfamily. Ser/Thr protein kinase family. WEE1 subfamily. Post-translationally, phosphorylation leads to increase its activity.

It is found in the nucleus. It carries out the reaction L-tyrosyl-[protein] + ATP = O-phospho-L-tyrosyl-[protein] + ADP + H(+). Its function is as follows. Oocyte-specific protein tyrosine kinase that phosphorylates and inhibits CDK1 and acts as a key regulator of meiosis during both prophase I and metaphase II. Required to maintain meiotic arrest in oocytes during the germinal vesicle (GV) stage, a long period of quiescence at dictyate prophase I, by phosphorylating CDK1 at 'Tyr-15', leading to inhibit CDK1 activity and prevent meiotic reentry. Also required for metaphase II exit during egg activation by phosphorylating CDK1 at 'Tyr-15', to ensure exit from meiosis in oocytes and promote pronuclear formation. The protein is Wee1-like protein kinase 2 (WEE2) of Canis lupus familiaris (Dog).